The chain runs to 1051 residues: Exportin-T (1051 aa).

It belongs to the exportin family.

Its subcellular location is the nucleus. It is found in the cytoplasm. Its function is as follows. tRNA nucleus export receptor which facilitates tRNA translocation across the nuclear pore complex. Involved in pre-tRNA splicing, probably by affecting the interaction of pre-tRNA with splicing endonuclease. The protein is Exportin-T (LOS1) of Eremothecium gossypii (strain ATCC 10895 / CBS 109.51 / FGSC 9923 / NRRL Y-1056) (Yeast).